Reading from the N-terminus, the 110-residue chain is Snake venom vascular endothelial growth factor toxin (110 aa).

Glutamine 1 is modified (pyrrolidone carboxylic acid). 3 cysteine pairs are disulfide-bonded: cysteine 14-cysteine 56, cysteine 45-cysteine 91, and cysteine 49-cysteine 93.

This sequence belongs to the PDGF/VEGF growth factor family. Snake venom VEGF subfamily. As to quaternary structure, homodimer; disulfide-linked. Expressed by the venom gland.

The protein resides in the secreted. Snake venom VEGFs that may contribute to venom dispersion and prey subjugation by inducing vascular permeability and hypotension. This protein potently stimulates dermal human microvascular endothelial cell (dHMVEC) proliferation in a VEGFR-2 dependent manner. This stimulatory effect is correlated with activation of the MAPK Erk1/2 signaling pathway. It also appears to be a chemoattractant for migration of these cells and stimulates their radial migration in a collagen gel. In vivo, it induces angiogenesis in a Japanese quail assay. This pro-angiogenic effect may also be related to its interaction with VEGFR-2. In addition, it may induce an increase in capillary permeability after intradermal injection, as well as a drastic hypotensive effect after intravenous injection. The hypotension is mediated by nitric oxide (NO), which is produced by VEGF-activated endothelium NO synthase. The sequence is that of Snake venom vascular endothelial growth factor toxin from Daboia palaestinae (Palestine viper).